A 118-amino-acid polypeptide reads, in one-letter code: Basic phospholipase A2 nigroxin A (118 aa).

7 disulfides stabilise this stretch: C11–C70, C25–C117, C27–C43, C42–C98, C49–C91, C59–C84, and C77–C89. Ca(2+) contacts are provided by Y26, G28, and G30. Residue H46 is part of the active site. A Ca(2+)-binding site is contributed by D47. D92 is a catalytic residue.

It belongs to the phospholipase A2 family. Group I subfamily. D49 sub-subfamily. Requires Ca(2+) as cofactor. In terms of tissue distribution, expressed by the venom gland.

Its subcellular location is the secreted. The enzyme catalyses a 1,2-diacyl-sn-glycero-3-phosphocholine + H2O = a 1-acyl-sn-glycero-3-phosphocholine + a fatty acid + H(+). In terms of biological role, snake venom phospholipase A2 (PLA2) that has only a weak enzymatic activity. It has a myotoxic activity in vivo (dystrophic effect). PLA2 catalyzes the calcium-dependent hydrolysis of the 2-acyl groups in 3-sn-phosphoglycerides. The sequence is that of Basic phospholipase A2 nigroxin A from Micrurus nigrocinctus (Central American coral snake).